Reading from the N-terminus, the 250-residue chain is 5'-nucleotidase SurE (250 aa).

A divalent metal cation-binding residues include D8, D9, S40, and N92.

It belongs to the SurE nucleotidase family. A divalent metal cation serves as cofactor.

It is found in the cytoplasm. The catalysed reaction is a ribonucleoside 5'-phosphate + H2O = a ribonucleoside + phosphate. In terms of biological role, nucleotidase that shows phosphatase activity on nucleoside 5'-monophosphates. The polypeptide is 5'-nucleotidase SurE (Dichelobacter nodosus (strain VCS1703A)).